The sequence spans 525 residues: Beta-galactoside alpha-2,6-sialyltransferase 2 (525 aa).

The Cytoplasmic segment spans residues 1–11 (MKPHLKQWRQR). A helical; Signal-anchor for type II membrane protein transmembrane segment spans residues 12-32 (MLFAIFVWGLLFLAIFIYFTN). Topologically, residues 33 to 525 (SNPAAPMPSS…PVTRPNNTNT (493 aa)) are lumenal. 2 disordered regions span residues 85-107 (SASPFNSWPGDPQKGDQAQDGFD) and 145-183 (RQGALGLPSPGESSWQSGPGQPKQEKLRHPRRGSLPEEA). 3 disulfide bridges follow: Cys249/Cys515, Cys292/Cys444, and Cys462/Cys473. Residues Asn303 and Asn333 are each glycosylated (N-linked (GlcNAc...) asparagine). Asn521 carries an N-linked (GlcNAc...) asparagine glycan.

Belongs to the glycosyltransferase 29 family.

Its subcellular location is the golgi apparatus. It localises to the golgi stack membrane. The enzyme catalyses a beta-D-galactoside + CMP-N-acetyl-beta-neuraminate = an N-acetyl-alpha-neuraminyl-(2-&gt;6)-beta-D-galactosyl derivative + CMP + H(+). Transfers sialic acid from the donor of substrate CMP-sialic acid to galactose containing acceptor substrates. Has alpha-2,6-sialyltransferase activity toward oligosaccharides that have the Gal-beta-1,4-GlcNAc sequence at the non-reducing end of their carbohydrate groups, but it has weak or no activities toward glycoproteins and glycolipids. This Rattus norvegicus (Rat) protein is Beta-galactoside alpha-2,6-sialyltransferase 2 (St6gal2).